The primary structure comprises 80 residues: Large ribosomal subunit protein bL31 (80 aa).

Positions 16, 18, 38, and 41 each coordinate Zn(2+).

The protein belongs to the bacterial ribosomal protein bL31 family. Type A subfamily. As to quaternary structure, part of the 50S ribosomal subunit. Requires Zn(2+) as cofactor.

Binds the 23S rRNA. This Mycobacterium avium (strain 104) protein is Large ribosomal subunit protein bL31.